The primary structure comprises 201 residues: Holliday junction branch migration complex subunit RuvA (201 aa).

Residues 1 to 63 are domain I; sequence MYDYIKGIVK…EDNISLFGFQ (63 aa). The tract at residues 64–142 is domain II; that stretch reads STEERYLFKK…DVVASEIVYK (79 aa). The segment at 143–153 is flexible linker; it reads AAENDIVTGLS. The segment at 153 to 201 is domain III; sequence SPQLEEAVLALEALGYSTRELKKVIPKMAKENDLTSDAYIKLALRLMTK.

It belongs to the RuvA family. Homotetramer. Forms an RuvA(8)-RuvB(12)-Holliday junction (HJ) complex. HJ DNA is sandwiched between 2 RuvA tetramers; dsDNA enters through RuvA and exits via RuvB. An RuvB hexamer assembles on each DNA strand where it exits the tetramer. Each RuvB hexamer is contacted by two RuvA subunits (via domain III) on 2 adjacent RuvB subunits; this complex drives branch migration. In the full resolvosome a probable DNA-RuvA(4)-RuvB(12)-RuvC(2) complex forms which resolves the HJ.

It is found in the cytoplasm. Its function is as follows. The RuvA-RuvB-RuvC complex processes Holliday junction (HJ) DNA during genetic recombination and DNA repair, while the RuvA-RuvB complex plays an important role in the rescue of blocked DNA replication forks via replication fork reversal (RFR). RuvA specifically binds to HJ cruciform DNA, conferring on it an open structure. The RuvB hexamer acts as an ATP-dependent pump, pulling dsDNA into and through the RuvAB complex. HJ branch migration allows RuvC to scan DNA until it finds its consensus sequence, where it cleaves and resolves the cruciform DNA. This chain is Holliday junction branch migration complex subunit RuvA, found in Listeria innocua serovar 6a (strain ATCC BAA-680 / CLIP 11262).